Reading from the N-terminus, the 599-residue chain is UvrABC system protein C (599 aa).

Residues 18–96 (QLPGVYKMLG…IKQHRPPYNI (79 aa)) form the GIY-YIG domain. The UVR domain maps to 207 to 242 (KELNQELIAKMEQAAADLEFEKAVFYRDRLSLLREV).

Belongs to the UvrC family. In terms of assembly, interacts with UvrB in an incision complex.

The protein localises to the cytoplasm. The UvrABC repair system catalyzes the recognition and processing of DNA lesions. UvrC both incises the 5' and 3' sides of the lesion. The N-terminal half is responsible for the 3' incision and the C-terminal half is responsible for the 5' incision. The sequence is that of UvrABC system protein C from Acinetobacter baumannii (strain SDF).